A 64-amino-acid polypeptide reads, in one-letter code: Large ribosomal subunit protein bL35 (64 aa).

Basic residues predominate over residues 1–28; that stretch reads MSKAKTHSGAAKRFKKTASGYKHKHAFK. The interval 1–51 is disordered; sequence MSKAKTHSGAAKRFKKTASGYKHKHAFKSHILTKMTTKRKRQLRGTSLLNA.

It belongs to the bacterial ribosomal protein bL35 family.

The chain is Large ribosomal subunit protein bL35 from Saccharophagus degradans (strain 2-40 / ATCC 43961 / DSM 17024).